The sequence spans 484 residues: tRNA nucleotidyltransferase cca2 (484 aa).

Residues 122–124 (RAE) carry the B/A element motif. The interval 125 to 142 (SYDDKSRIPSVTPGTVET) is flexible loop. The ERhxxExxxhh motif motif lies at 234-244 (ERVGEEIEKML).

It belongs to the tRNA nucleotidyltransferase/poly(A) polymerase family.

Its subcellular location is the cytoplasm. It catalyses the reaction a tRNA with a 3' CC end + ATP = a tRNA with a 3' CCA end + diphosphate. Functionally, tRNA nucleotidyltransferase involved in the synthesis of the tRNA CCA terminus. In contrast to what is usually observed in eukaryotes for which one enzyme synthesizes the whole tRNA CCA terminus, in S.pombe, cca1 specifically adds two cytidine residues to a tRNA substrate lacking this sequence while cca2 specifically adds the terminal adenosine residue thereby completing the CCA sequence. This chain is tRNA nucleotidyltransferase cca2, found in Schizosaccharomyces pombe (strain 972 / ATCC 24843) (Fission yeast).